We begin with the raw amino-acid sequence, 199 residues long: Protein-methionine-sulfoxide reductase heme-binding subunit MsrQ (199 aa).

6 helical membrane-spanning segments follow: residues 8-28 (IAWL…WLFW), 54-74 (FLLA…PLLI), 82-102 (LWCF…ELGI), 116-136 (PYLT…ATST), 149-169 (LLHN…LWSV), and 171-191 (IVSP…ACRY).

The protein belongs to the MsrQ family. Heterodimer of a catalytic subunit (MsrP) and a heme-binding subunit (MsrQ). Requires FMN as cofactor. The cofactor is heme b.

The protein localises to the cell inner membrane. In terms of biological role, part of the MsrPQ system that repairs oxidized periplasmic proteins containing methionine sulfoxide residues (Met-O), using respiratory chain electrons. Thus protects these proteins from oxidative-stress damage caused by reactive species of oxygen and chlorine generated by the host defense mechanisms. MsrPQ is essential for the maintenance of envelope integrity under bleach stress, rescuing a wide series of structurally unrelated periplasmic proteins from methionine oxidation. MsrQ provides electrons for reduction to the reductase catalytic subunit MsrP, using the quinone pool of the respiratory chain. This chain is Protein-methionine-sulfoxide reductase heme-binding subunit MsrQ, found in Klebsiella pneumoniae (strain 342).